The sequence spans 41 residues: U-theraphotoxin-Lk1a (41 aa).

3 cysteine pairs are disulfide-bonded: C1–C16, C8–C21, and C15–C36.

This sequence belongs to the neurotoxin 14 (magi-1) family. 08 (Ltx-4) subfamily. Expressed by the venom gland.

It is found in the secreted. Toxin that causes irreversible contractile paralysis in adult Aedes aegypti resulting in 100% mortality after 24 hours. This chain is U-theraphotoxin-Lk1a, found in Lasiodora klugi (Bahia scarlet tarantula).